The chain runs to 1169 residues: Flocculation protein FLO10 (1169 aa).

The first 24 residues, 1-24 (MPVAARYIFLTGLFLLSVANVALG), serve as a signal peptide directing secretion. The region spanning 111-271 (PVKRGVKLCS…GTEVNDDFEG (161 aa)) is the PA14 domain. N-linked (GlcNAc...) asparagine glycosylation is found at Asn-122, Asn-157, and Asn-279. A run of 10 repeats spans residues 303–326 (SSWSSSEVCTECTETESTSYVTPY), 330–356 (SSWSSSEVCTECTETESTSTSTPYVTS), 357–383 (SSSSSSEVCTECTETESTSYVTPYVSS), 384–419 (STAAANYTSSFSSSSEVCTECTETESTSTSTPYVTS), 420–446 (SSWSSSEVCTECTETESTSYVTPYVSS), 447–482 (STAAANYTSSFSSSSEVCTECTETESTSTSTPYVTS), 483–509 (SSSSSSEVCTECTETESTSYVTPYVSS), 510–545 (STAAANYTSSFSSSSEVCTECTETESTSTSTPYVTS), 546–572 (SSWSSSEVCTECTETESTSYVTPYVSS), and 573–608 (STAAANYTSSFSSSSEVCTECTETESTSTSTPYATS). The tract at residues 303 to 572 (SSWSSSEVCT…TSYVTPYVSS (270 aa)) is 6 X 27 AA approximate repeats, Ser/Thr-rich. The segment at 384-608 (STAAANYTSS…TSTSTPYATS (225 aa)) is 4 X 36 AA approximate repeats, Ser/Thr-rich. The N-linked (GlcNAc...) asparagine glycan is linked to Asn-389. The N-linked (GlcNAc...) asparagine glycan is linked to Asn-452. N-linked (GlcNAc...) asparagine glycosylation occurs at Asn-515. N-linked (GlcNAc...) asparagine glycosylation is found at Asn-578, Asn-656, and Asn-686. The segment covering 798-819 (TKVSSSESSESHRTSPTTSSES) has biased composition (low complexity). Disordered stretches follow at residues 798-837 (TKVSSSESSESHRTSPTTSSESGIKSSGVEIESTSTSSFS), 856-920 (TPSS…SRDR), and 1070-1107 (RNNNFVPTSGTTSIETHTTTTSNASENSDNVSASEAVS). The segment covering 856–884 (TPSSPISTVAPRSTGLNSQTESTNSSKET) has biased composition (polar residues). Asn-879 carries an N-linked (GlcNAc...) asparagine glycan. Residues 886-902 (SSENSASVMPSSSATSP) are compositionally biased toward low complexity. The segment covering 906 to 916 (KVTSDETSSGF) has biased composition (polar residues). Positions 1077–1107 (TSGTTSIETHTTTTSNASENSDNVSASEAVS) are enriched in low complexity. N-linked (GlcNAc...) asparagine glycans are attached at residues Asn-1092 and Asn-1099. A lipid anchor (GPI-anchor amidated glycine) is attached at Gly-1146. The propeptide at 1147–1169 (IANHLLTNSGISIFIASLLLAIV) is removed in mature form.

This sequence belongs to the flocculin family. In terms of processing, extensively O-glycosylated. The GPI-anchor is attached to the protein in the endoplasmic reticulum and serves to target the protein to the cell surface. There, the glucosamine-inositol phospholipid moiety is cleaved off and the GPI-modified mannoprotein is covalently attached via its lipidless GPI glycan remnant to the 1,6-beta-glucan of the outer cell wall layer.

It localises to the secreted. The protein localises to the cell wall. The protein resides in the membrane. Functionally, cell wall protein that participates directly in adhesive cell-cell interactions during yeast flocculation, a reversible, asexual and Ca(2+)-dependent process in which cells adhere to form aggregates (flocs) consisting of thousands of cells. The lectin-like protein sticks out of the cell wall of flocculent cells and selectively binds mannose residues in the cell walls of adjacent cells. Activity is inhibited by mannose, glucose, maltose and sucrose. Also involved in cell-substrate adhesion, haploid invasive growth and diploid pseudohyphae formation. This is Flocculation protein FLO10 (FLO10) from Saccharomyces cerevisiae (strain ATCC 204508 / S288c) (Baker's yeast).